The sequence spans 160 residues: Endoribonuclease YbeY (160 aa).

Zn(2+) is bound by residues histidine 123, histidine 127, and histidine 133.

It belongs to the endoribonuclease YbeY family. Zn(2+) is required as a cofactor.

It localises to the cytoplasm. Single strand-specific metallo-endoribonuclease involved in late-stage 70S ribosome quality control and in maturation of the 3' terminus of the 16S rRNA. This is Endoribonuclease YbeY from Roseiflexus sp. (strain RS-1).